The following is a 342-amino-acid chain: Flavanone 3-dioxygenase 2 (342 aa).

The 101-residue stretch at 193-293 (QEQHMAVNYY…RMSVASFLCP (101 aa)) folds into the Fe2OG dioxygenase domain. Residues His-217, Asp-219, and His-274 each coordinate Fe cation. Arg-284 is a binding site for 2-oxoglutarate.

It belongs to the iron/ascorbate-dependent oxidoreductase family. Fe(2+) is required as a cofactor. The cofactor is L-ascorbate. Expressed in roots, leaves and stems. Expressed at low levels in seeds.

It carries out the reaction a (2S)-flavan-4-one + 2-oxoglutarate + O2 = a (2R,3R)-dihydroflavonol + succinate + CO2. The protein operates within secondary metabolite biosynthesis; flavonoid biosynthesis. Functionally, catalyzes the 3-beta-hydroxylation of 2S-flavanones to 2R,3R-dihydroflavonols which are intermediates in the biosynthesis of flavonols, anthocyanidins, catechins and proanthocyanidins in plants. Converts (2S)-eriodictyol to (+)-taxifolin and (2S)-naringenin to (+)-(2R/3R)-dihydrokaempferol in vitro. In Oryza sativa subsp. japonica (Rice), this protein is Flavanone 3-dioxygenase 2.